The sequence spans 711 residues: Mitochondrial intermediate peptidase (711 aa).

Residues 1–33 (MLLAAGARYARRLCGRGAAAALQGRTGRSCARD) constitute a mitochondrion transit peptide. K124 carries the N6-acetyllysine modification. Position 493 (H493) interacts with Zn(2+). The active site involves E494. H497 and H500 together coordinate Zn(2+).

It belongs to the peptidase M3 family. As to quaternary structure, monomer. Zn(2+) is required as a cofactor.

It localises to the mitochondrion matrix. The catalysed reaction is Release of an N-terminal octapeptide as second stage of processing of some proteins imported into the mitochondrion.. Activity is divalent cation-dependent. It is stimulated by manganese, magnesium or calcium ions and reversibly inhibited by zinc, cobalt and iron. In terms of biological role, cleaves proteins, imported into the mitochondrion, to their mature size. This chain is Mitochondrial intermediate peptidase (Mipep), found in Mus musculus (Mouse).